The chain runs to 71 residues: MKILKIFLLSLLFWLQYSLWFGKNGVLDFIKIYRRVTIEKKNNEYLDMRNNQIILEIENFNNHINKDKKKT.

The Cytoplasmic segment spans residues 1 to 3 (MKI). The helical transmembrane segment at 4–21 (LKIFLLSLLFWLQYSLWF) threads the bilayer. Residues 22–71 (GKNGVLDFIKIYRRVTIEKKNNEYLDMRNNQIILEIENFNNHINKDKKKT) lie on the Extracellular side of the membrane.

This sequence belongs to the FtsB family.

The protein localises to the cell membrane. Functionally, essential cell division protein. May link together the upstream cell division proteins, which are predominantly cytoplasmic, with the downstream cell division proteins, which are predominantly extracellular. This Buchnera aphidicola subsp. Acyrthosiphon pisum (strain APS) (Acyrthosiphon pisum symbiotic bacterium) protein is Cell division protein FtsB.